The primary structure comprises 198 residues: Sorcin (198 aa).

EF-hand domains lie at 45–64 (QDGQIDADELQRCLTQSGIA), 70–98 (FNLETCRLMVSMLDRDMSGTMGFNEFKEL), 100–135 (AVLNGWRQHFISFDSDRSGTVDPQELQKALTTMGFR), and 151–169 (SGKITFDDYIACCVKLRAL). Ca(2+)-binding residues include Asp83, Asp85, Ser87, Thr89, Glu94, Asp113, Asp115, Ser117, Thr119, and Glu124. Residue Ser178 is modified to Phosphoserine.

As to quaternary structure, homodimer. Interacts with GCA, RYR2 and ANXA7. In terms of tissue distribution, detected in cardiac myocytes.

It localises to the cytoplasm. Its subcellular location is the sarcoplasmic reticulum membrane. In terms of biological role, calcium-binding protein that modulates excitation-contraction coupling in the heart. Contributes to calcium homeostasis in the heart sarcoplasmic reticulum. Modulates the activity of RYR2 calcium channels. The protein is Sorcin (Sri) of Mus musculus (Mouse).